The following is a 321-amino-acid chain: ATP-dependent 6-phosphofructokinase (321 aa).

ATP is bound at residue glycine 12. ADP-binding positions include 22-26 and 55-60; these read RGVVR and RYSVSD. Residues 73–74 and 103–106 each bind ATP; these read RF and GDGS. Residue aspartate 104 participates in Mg(2+) binding. 127 to 129 is a substrate binding site; it reads TID. Catalysis depends on aspartate 129, which acts as the Proton acceptor. Residue arginine 156 participates in ADP binding. Substrate-binding positions include arginine 164 and 171–173; that span reads MGR. Residues 187–189, arginine 213, and 215–217 each bind ADP; these read GCE and KRH. Substrate contacts are provided by residues glutamate 224, arginine 245, and 251–254; that span reads HIQR.

Belongs to the phosphofructokinase type A (PFKA) family. ATP-dependent PFK group I subfamily. Prokaryotic clade 'B1' sub-subfamily. In terms of assembly, homotetramer. It depends on Mg(2+) as a cofactor.

It is found in the cytoplasm. The enzyme catalyses beta-D-fructose 6-phosphate + ATP = beta-D-fructose 1,6-bisphosphate + ADP + H(+). It functions in the pathway carbohydrate degradation; glycolysis; D-glyceraldehyde 3-phosphate and glycerone phosphate from D-glucose: step 3/4. Allosterically activated by ADP and other diphosphonucleosides, and allosterically inhibited by phosphoenolpyruvate. Catalyzes the phosphorylation of D-fructose 6-phosphate to fructose 1,6-bisphosphate by ATP, the first committing step of glycolysis. The polypeptide is ATP-dependent 6-phosphofructokinase (Haemophilus influenzae (strain 86-028NP)).